The primary structure comprises 185 residues: uncharacterized protein (185 aa).

The signal sequence occupies residues 1 to 24 (MPCNRAVFGAFVLALLISLQSVYF). Residues 50–70 (VAVNVIVEFSFDILFFLCGLL) traverse the membrane as a helical segment. Over residues 96 to 113 (ELEHVSSRRRNDSRDDST) the composition is skewed to basic and acidic residues. Residues 96–185 (ELEHVSSRRR…LFTAGGIGLP (90 aa)) form a disordered region. Polar residues predominate over residues 114–126 (VRNVSKTSPLASQ). Residues 127–138 (RSRDHFDGDPRE) show a composition bias toward basic and acidic residues. The span at 139–155 (PAPPAYSPADFYPPPAS) shows a compositional bias: pro residues.

The protein resides in the host membrane. This is an uncharacterized protein from Colorado tick fever virus (strain USA/Florio N-7180) (CTFV).